We begin with the raw amino-acid sequence, 828 residues long: Molybdenum cofactor sulfurase (828 aa).

Lys-239 is subject to N6-(pyridoxal phosphate)lysine. Cys-402 is a catalytic residue. Residues 638-682 form a disordered region; sequence TRYTRRSLHSRSSTAALRRQRPVEESSMPGSFPSDTPLSRTPEPP. The MOSC domain occupies 652–825; that stretch reads AALRRQRPVE…VMVGDVVRPW (174 aa).

It belongs to the class-V pyridoxal-phosphate-dependent aminotransferase family. MOCOS subfamily. Pyridoxal 5'-phosphate serves as cofactor.

The enzyme catalyses Mo-molybdopterin + L-cysteine + AH2 = thio-Mo-molybdopterin + L-alanine + A + H2O. In terms of biological role, sulfurates the molybdenum cofactor. Sulfation of molybdenum is essential for xanthine dehydrogenase (XDH) and aldehyde oxidase (ADO) enzymes in which molybdenum cofactor is liganded by 1 oxygen and 1 sulfur atom in active form. This is Molybdenum cofactor sulfurase from Aspergillus terreus (strain NIH 2624 / FGSC A1156).